The chain runs to 333 residues: Transaldolase (333 aa).

Residue Lys-135 is the Schiff-base intermediate with substrate of the active site.

This sequence belongs to the transaldolase family. Type 1 subfamily. Homodimer.

The protein localises to the cytoplasm. The catalysed reaction is D-sedoheptulose 7-phosphate + D-glyceraldehyde 3-phosphate = D-erythrose 4-phosphate + beta-D-fructose 6-phosphate. It participates in carbohydrate degradation; pentose phosphate pathway; D-glyceraldehyde 3-phosphate and beta-D-fructose 6-phosphate from D-ribose 5-phosphate and D-xylulose 5-phosphate (non-oxidative stage): step 2/3. Its function is as follows. Transaldolase is important for the balance of metabolites in the pentose-phosphate pathway. This is Transaldolase from Prochlorococcus marinus (strain MIT 9312).